The following is a 68-amino-acid chain: Guanine nucleotide-binding protein G(I)/G(S)/G(O) subunit gamma-5B (68 aa).

One can recognise a G protein gamma domain in the interval 3–68 (GFSSVAATKK…FRPQKVCSFL (66 aa)). Residue C65 is modified to Cysteine methyl ester. Residue C65 is the site of S-geranylgeranyl cysteine attachment. Positions 66 to 68 (SFL) are cleaved as a propeptide — removed in mature form.

This sequence belongs to the G protein gamma family. In terms of assembly, g proteins are composed of 3 units; alpha, beta and gamma.

Its subcellular location is the cell membrane. Its function is as follows. Guanine nucleotide-binding proteins (G proteins) are involved as a modulator or transducer in various transmembrane signaling systems. The beta and gamma chains are required for the GTPase activity, for replacement of GDP by GTP, and for G protein-effector interaction. This chain is Guanine nucleotide-binding protein G(I)/G(S)/G(O) subunit gamma-5B, found in Homo sapiens (Human).